Consider the following 481-residue polypeptide: Ribosomal RNA small subunit methyltransferase F (481 aa).

Residues 119–125 (ASAPGSK), E143, D170, and D188 contribute to the S-adenosyl-L-methionine site. C241 acts as the Nucleophile in catalysis.

This sequence belongs to the class I-like SAM-binding methyltransferase superfamily. RsmB/NOP family.

The protein resides in the cytoplasm. The enzyme catalyses cytidine(1407) in 16S rRNA + S-adenosyl-L-methionine = 5-methylcytidine(1407) in 16S rRNA + S-adenosyl-L-homocysteine + H(+). Functionally, specifically methylates the cytosine at position 1407 (m5C1407) of 16S rRNA. The chain is Ribosomal RNA small subunit methyltransferase F from Shewanella sp. (strain MR-4).